The chain runs to 49 residues: Large ribosomal subunit protein eL40 (49 aa).

This sequence belongs to the eukaryotic ribosomal protein eL40 family.

This is Large ribosomal subunit protein eL40 from Haloquadratum walsbyi (strain DSM 16790 / HBSQ001).